We begin with the raw amino-acid sequence, 1396 residues long: MNQEVLNIFNPVQAAPTFDQIRISLASPEKIRSWSFGEIKKPETINYRTFKPERDGLFCARIFGPTKDYECLCGKYKRMKYKGIICEKCGVEVTLARVRRERMGHIELASPVAHIWFLKSLPSRIAMMLDMPLKDIERVLYFEYYIVTEPGLTPLKQHQLLSEDDYMRAQEEYGDDSFTAEIGAEAIQNLLKAIDLEKEAERLREELSGTVSDMKQKKFSKRLKILEAFQESGNRPEWMVLTVVPVIPPELRPLVPLDGGRFATSDLNDLYRRVINRNNRLKRLIELRAPDIIIRNEKRMLQESVDALFDNGRRGRVITGANKRPLKSLADMLKGKQGRFRQNLLGKRVDYSGRSVIVVGPELKLHECGLPKKMALELFKPFIYARLDAKGLSGTVKQSKRMVEREQPQVWDILEEVIREHPVLLNRAPTLHRLGIQAFEPKLIEGKAIQLHPLVCAAFNADFDGDQMAVHVPLSLEAQLEARVLMMSTNNILSPANGRPIIVPSQDIVLGLYYLSVARDGEPGEGKIFADLGEIEAAMDAGVVSLHAKIKARHTEMTPEGVLLRKVIDTTPGRMKIAALLPHHPQIGHRLIEKALTKKEIGNLIDIVYRHCGQKATVIFADKVMGLGFKEAAKAGISFGKDDIIIPVRKTAIVEETRKLAEEYEQQYADGLITKGEKYNKVVDAWAKATDRVADEMMAELQMKHKDENGREKEINAIYMMAHSGARGSQAQMKQLGGMRGLMAKPSGEIIETPIVSNFKEGLTVQEYFNSTHGARKGLADTALKTANSGYLTRRLVDVAQDCIIVEEDCGTTKGITLRAVVEGGDVLVSLGSRVLGRFTAEDVKDPGTGELVVPADTYIDENIADAIEAAVVQSVKVRSVLTCEAKIGVCGACYGRDLARGTPVNIGEAVGVIAAQSIGEPGTQLTMRTFHIGGTAQVAEQSFFEASNEGTVRVIGPTVVGSDGALVIMSRNTSVSVLVDGKERETYKPPYGARLRVKDGDLVKRGQRLGDWDPYTTPIITEVAGKIRAEDLVDGLSIREEVDEATGIAQRVVADWRTSARGSDLRPAMGVLSEDGSYKRLSNGGEARYLLSAGAILSVADGDEVKPGEVIARIPTEGAKTRDITGGLPRVAELFEARRPKDCAVIAEMDGRVEFGKDYKNKRRIKITPDVDADGNQPEAVEFLIPKGKHIAVHDGDYITKGEYIIDGNPDPHDILRILGVEALANFLVDEIQEVYRLQGVPINDKHIETIVRQMLQKVEILEPGDTGLIKGDHLDKPEFDKEQEKAIARGGRPAVTQPVLLGITKASLQTKSFISAASFQETTRVLTEASVHGKTDTLEGLKENVIVGRLIPAGTGSYLRSLQRVAAKRDEQLAQQREDAMEPLPAEIALSDAE.

Cys71, Cys73, Cys86, and Cys89 together coordinate Zn(2+). Mg(2+)-binding residues include Asp462, Asp464, and Asp466. Residues Cys810, Cys884, Cys891, and Cys894 each coordinate Zn(2+). Residues 1372–1382 (DEQLAQQREDA) show a composition bias toward basic and acidic residues. Positions 1372-1396 (DEQLAQQREDAMEPLPAEIALSDAE) are disordered.

This sequence belongs to the RNA polymerase beta' chain family. As to quaternary structure, the RNAP catalytic core consists of 2 alpha, 1 beta, 1 beta' and 1 omega subunit. When a sigma factor is associated with the core the holoenzyme is formed, which can initiate transcription. Mg(2+) serves as cofactor. The cofactor is Zn(2+).

It carries out the reaction RNA(n) + a ribonucleoside 5'-triphosphate = RNA(n+1) + diphosphate. In terms of biological role, DNA-dependent RNA polymerase catalyzes the transcription of DNA into RNA using the four ribonucleoside triphosphates as substrates. In Caulobacter vibrioides (strain ATCC 19089 / CIP 103742 / CB 15) (Caulobacter crescentus), this protein is DNA-directed RNA polymerase subunit beta'.